Here is a 95-residue protein sequence, read N- to C-terminus: Aspartyl/glutamyl-tRNA(Asn/Gln) amidotransferase subunit C (95 aa).

The protein belongs to the GatC family. As to quaternary structure, heterotrimer of A, B and C subunits.

It carries out the reaction L-glutamyl-tRNA(Gln) + L-glutamine + ATP + H2O = L-glutaminyl-tRNA(Gln) + L-glutamate + ADP + phosphate + H(+). The enzyme catalyses L-aspartyl-tRNA(Asn) + L-glutamine + ATP + H2O = L-asparaginyl-tRNA(Asn) + L-glutamate + ADP + phosphate + 2 H(+). Functionally, allows the formation of correctly charged Asn-tRNA(Asn) or Gln-tRNA(Gln) through the transamidation of misacylated Asp-tRNA(Asn) or Glu-tRNA(Gln) in organisms which lack either or both of asparaginyl-tRNA or glutaminyl-tRNA synthetases. The reaction takes place in the presence of glutamine and ATP through an activated phospho-Asp-tRNA(Asn) or phospho-Glu-tRNA(Gln). The sequence is that of Aspartyl/glutamyl-tRNA(Asn/Gln) amidotransferase subunit C from Methylococcus capsulatus (strain ATCC 33009 / NCIMB 11132 / Bath).